Here is a 60-residue protein sequence, read N- to C-terminus: Protein MGF 360-5L (60 aa).

This sequence belongs to the asfivirus MGF 360 family.

Plays a role in virus cell tropism, and may be required for efficient virus replication in macrophages. The protein is Protein MGF 360-5L of Ornithodoros (relapsing fever ticks).